Here is a 604-residue protein sequence, read N- to C-terminus: Aspartate--tRNA(Asp/Asn) ligase (604 aa).

An L-aspartate-binding site is contributed by glutamate 169. An aspartate region spans residues 193–196 (QLFK). L-aspartate is bound at residue arginine 215. Residues 215 to 217 (RDE) and glutamine 224 each bind ATP. L-aspartate is bound at residue histidine 456. Position 490 (glutamate 490) interacts with ATP. Arginine 497 provides a ligand contact to L-aspartate. An ATP-binding site is contributed by 542–545 (GWDR). The tract at residues 571-604 (PLTGAPAPITAQQRKEAGVDAQPEPKQAEAEPEA) is disordered.

Belongs to the class-II aminoacyl-tRNA synthetase family. Type 1 subfamily. In terms of assembly, homodimer.

It localises to the cytoplasm. It catalyses the reaction tRNA(Asx) + L-aspartate + ATP = L-aspartyl-tRNA(Asx) + AMP + diphosphate. Aspartyl-tRNA synthetase with relaxed tRNA specificity since it is able to aspartylate not only its cognate tRNA(Asp) but also tRNA(Asn). Reaction proceeds in two steps: L-aspartate is first activated by ATP to form Asp-AMP and then transferred to the acceptor end of tRNA(Asp/Asn). This Micrococcus luteus (strain ATCC 4698 / DSM 20030 / JCM 1464 / CCM 169 / CCUG 5858 / IAM 1056 / NBRC 3333 / NCIMB 9278 / NCTC 2665 / VKM Ac-2230) (Micrococcus lysodeikticus) protein is Aspartate--tRNA(Asp/Asn) ligase.